Here is a 422-residue protein sequence, read N- to C-terminus: AP-1 complex subunit mu-1-I (422 aa).

Residues Lys-167–Arg-420 enclose the MHD domain.

It belongs to the adaptor complexes medium subunit family. As to quaternary structure, adaptor protein complex 1 (AP-1) is a heterotetramer composed of two large adaptins (gamma- and beta'-type subunits), a medium adaptin (mu-type subunit AP47) and a small adaptin (sigma-type subunit AP19). Interacts (via N-terminus) with kvs-4. In terms of tissue distribution, expressed in the cholinergic motor neuron DA9.

Its subcellular location is the golgi apparatus. The protein resides in the cytoplasmic vesicle. The protein localises to the clathrin-coated vesicle membrane. It localises to the cell projection. It is found in the dendrite. Component of the adaptor complexes which link clathrin to receptors in coated vesicles. Clathrin-associated protein complexes are believed to interact with the cytoplasmic tails of membrane proteins, leading to their selection and concentration. Required for many aspects of development and behavior, including negative regulation of vulval differentiation. Required for the dendritic localization of potassium channel kvs-4 in the cholinergic motor neuron DA9. This chain is AP-1 complex subunit mu-1-I (unc-101), found in Caenorhabditis elegans.